The following is a 1297-amino-acid chain: Insulin receptor-related protein (1297 aa).

Positions 1 to 26 (MAVPSLWPWGACLPVIFLSLGFGLDT) are cleaved as a signal peptide. Asn47 is a glycosylation site (N-linked (GlcNAc...) asparagine). 9 cysteine pairs are disulfide-bonded: Cys214/Cys222, Cys216/Cys228, Cys229/Cys237, Cys233/Cys246, Cys249/Cys258, Cys262/Cys274, Cys280/Cys300, Cys304/Cys317, and Cys320/Cys324. An N-linked (GlcNAc...) asparagine glycan is attached at Asn311. N-linked (GlcNAc...) asparagine glycosylation is found at Asn411, Asn492, Asn528, Asn616, and Asn634. Fibronectin type-III domains follow at residues 483–603 (QTRT…TLPA) and 607–707 (VPQD…AQEA). An intrachain disulfide couples Cys657 to Cys864. Disordered regions lie at residues 666–687 (SNNDPRFDGEDGDPEAEMESDC) and 732–758 (SINKSPQRDSGRHRRAAGPLRLGGNSS). The span at 675–685 (EDGDPEAEMES) shows a compositional bias: acidic residues. At 747–921 (AAGPLRLGGN…PEEEDAGGLH (175 aa)) the chain is on the extracellular side. N-linked (GlcNAc...) asparagine glycosylation is found at Asn756, Asn885, and Asn898. The 96-residue stretch at 818–913 (IPGKVAWEAS…SVAFYILGPE (96 aa)) folds into the Fibronectin type-III 3 domain. A helical transmembrane segment spans residues 922-943 (VLLTATPVGLTLLIVLAALGFF). Residues 944 to 1297 (YGKKRNRTLY…CSPQNGGPGH (354 aa)) are Cytoplasmic-facing. The region spanning 979–1254 (ISIIRELGQG…SIQEELRPSF (276 aa)) is the Protein kinase domain. ATP is bound by residues 985 to 993 (LGQGSFGMV) and Lys1013. The active-site Proton acceptor is Asp1115. Phosphotyrosine; by autocatalysis is present on residues Tyr1145 and Tyr1146. Residues 1267 to 1297 (GARGSLPTTDAEPDSSPTPRDCSPQNGGPGH) are disordered. Over residues 1281–1297 (SSPTPRDCSPQNGGPGH) the composition is skewed to polar residues.

The protein belongs to the protein kinase superfamily. Tyr protein kinase family. Insulin receptor subfamily. In terms of assembly, probable tetramer of 2 alpha and 2 beta chains linked by disulfide bonds. The alpha chains contribute to the formation of the ligand-binding domain, while the beta chains carry the kinase domain. In terms of processing, autophosphorylated on tyrosine residues between pH 7.9 and pH 10.5.

It localises to the membrane. It catalyses the reaction L-tyrosyl-[protein] + ATP = O-phospho-L-tyrosyl-[protein] + ADP + H(+). Receptor with tyrosine-protein kinase activity. Functions as a pH sensing receptor which is activated by increased extracellular pH. Activates an intracellular signaling pathway that involves IRS1 and AKT1/PKB. The chain is Insulin receptor-related protein (INSRR) from Homo sapiens (Human).